The following is a 204-amino-acid chain: MIGRLRGTLIEKLPPQILIEVGGIGYEVQMPMSCIYELPNIGEEAIIYTHFVVREDAQLLYGFNTVSERALFREVIKANGVGPKMGLAILSGMTANQFVTCVEKEDISTLIKLPGVGKKTAERLVVEMKDRLKGWGAGDLFTPATDAAPVDSTPVIAQNAQEEAMSALLALGYKPPQASKAVSQVAKAGMSSEELIREALKSMV.

The segment at 1–64 is domain I; it reads MIGRLRGTLI…EDAQLLYGFN (64 aa). The segment at 65–143 is domain II; it reads TVSERALFRE…GWGAGDLFTP (79 aa). The tract at residues 144–155 is flexible linker; the sequence is ATDAAPVDSTPV. Residues 156–204 form a domain III region; sequence IAQNAQEEAMSALLALGYKPPQASKAVSQVAKAGMSSEELIREALKSMV.

The protein belongs to the RuvA family. As to quaternary structure, homotetramer. Forms an RuvA(8)-RuvB(12)-Holliday junction (HJ) complex. HJ DNA is sandwiched between 2 RuvA tetramers; dsDNA enters through RuvA and exits via RuvB. An RuvB hexamer assembles on each DNA strand where it exits the tetramer. Each RuvB hexamer is contacted by two RuvA subunits (via domain III) on 2 adjacent RuvB subunits; this complex drives branch migration. In the full resolvosome a probable DNA-RuvA(4)-RuvB(12)-RuvC(2) complex forms which resolves the HJ.

The protein localises to the cytoplasm. Functionally, the RuvA-RuvB-RuvC complex processes Holliday junction (HJ) DNA during genetic recombination and DNA repair, while the RuvA-RuvB complex plays an important role in the rescue of blocked DNA replication forks via replication fork reversal (RFR). RuvA specifically binds to HJ cruciform DNA, conferring on it an open structure. The RuvB hexamer acts as an ATP-dependent pump, pulling dsDNA into and through the RuvAB complex. HJ branch migration allows RuvC to scan DNA until it finds its consensus sequence, where it cleaves and resolves the cruciform DNA. This chain is Holliday junction branch migration complex subunit RuvA, found in Vibrio cholerae serotype O1 (strain ATCC 39541 / Classical Ogawa 395 / O395).